A 317-amino-acid polypeptide reads, in one-letter code: Acetyl-coenzyme A carboxylase carboxyl transferase subunit alpha (317 aa).

Residues 33–294 enclose the CoA carboxyltransferase C-terminal domain; it reads NLDDEIARLQ…KQRLLEDLAD (262 aa).

This sequence belongs to the AccA family. As to quaternary structure, acetyl-CoA carboxylase is a heterohexamer composed of biotin carboxyl carrier protein (AccB), biotin carboxylase (AccC) and two subunits each of ACCase subunit alpha (AccA) and ACCase subunit beta (AccD).

Its subcellular location is the cytoplasm. It carries out the reaction N(6)-carboxybiotinyl-L-lysyl-[protein] + acetyl-CoA = N(6)-biotinyl-L-lysyl-[protein] + malonyl-CoA. It functions in the pathway lipid metabolism; malonyl-CoA biosynthesis; malonyl-CoA from acetyl-CoA: step 1/1. Its function is as follows. Component of the acetyl coenzyme A carboxylase (ACC) complex. First, biotin carboxylase catalyzes the carboxylation of biotin on its carrier protein (BCCP) and then the CO(2) group is transferred by the carboxyltransferase to acetyl-CoA to form malonyl-CoA. This Glaesserella parasuis serovar 5 (strain SH0165) (Haemophilus parasuis) protein is Acetyl-coenzyme A carboxylase carboxyl transferase subunit alpha.